The following is a 547-amino-acid chain: GMP synthase [glutamine-hydrolyzing] (547 aa).

One can recognise a Glutamine amidotransferase type-1 domain in the interval 12-210; that stretch reads KVLILDFGSQ…VLEIAGAKPD (199 aa). The active-site Nucleophile is Cys89. Active-site residues include His184 and Glu186. The GMPS ATP-PPase domain occupies 211-403; that stretch reads WIMRDHIEEA…LGLPPEMVYR (193 aa). 238 to 244 provides a ligand contact to ATP; the sequence is SGGVDSS.

As to quaternary structure, homodimer.

The catalysed reaction is XMP + L-glutamine + ATP + H2O = GMP + L-glutamate + AMP + diphosphate + 2 H(+). Its pathway is purine metabolism; GMP biosynthesis; GMP from XMP (L-Gln route): step 1/1. In terms of biological role, catalyzes the synthesis of GMP from XMP. This is GMP synthase [glutamine-hydrolyzing] from Ralstonia nicotianae (strain ATCC BAA-1114 / GMI1000) (Ralstonia solanacearum).